Here is a 418-residue protein sequence, read N- to C-terminus: Serine hydroxymethyltransferase 2 (418 aa).

Residues leucine 121 and 125-127 (GHL) each bind (6S)-5,6,7,8-tetrahydrofolate. Position 230 is an N6-(pyridoxal phosphate)lysine (lysine 230). (6S)-5,6,7,8-tetrahydrofolate is bound at residue 355–357 (SPF).

Belongs to the SHMT family. As to quaternary structure, homodimer. Requires pyridoxal 5'-phosphate as cofactor.

Its subcellular location is the cytoplasm. It catalyses the reaction (6R)-5,10-methylene-5,6,7,8-tetrahydrofolate + glycine + H2O = (6S)-5,6,7,8-tetrahydrofolate + L-serine. It functions in the pathway one-carbon metabolism; tetrahydrofolate interconversion. The protein operates within amino-acid biosynthesis; glycine biosynthesis; glycine from L-serine: step 1/1. Its function is as follows. Catalyzes the reversible interconversion of serine and glycine with tetrahydrofolate (THF) serving as the one-carbon carrier. This reaction serves as the major source of one-carbon groups required for the biosynthesis of purines, thymidylate, methionine, and other important biomolecules. Also exhibits THF-independent aldolase activity toward beta-hydroxyamino acids, producing glycine and aldehydes, via a retro-aldol mechanism. The protein is Serine hydroxymethyltransferase 2 of Pseudomonas aeruginosa (strain ATCC 15692 / DSM 22644 / CIP 104116 / JCM 14847 / LMG 12228 / 1C / PRS 101 / PAO1).